A 215-amino-acid chain; its full sequence is Cytochrome b6 (215 aa).

A helical transmembrane segment spans residues 32–52; sequence IFYCLGGITLTCFLVQVATGF. C35 is a heme c binding site. Heme b-binding residues include H86 and H100. 3 helical membrane passes run 90–110, 116–136, and 186–206; these read ASMM…TGGF, LTWV…VTGY, and LHTF…FPMI. The heme b site is built by H187 and H202.

The protein belongs to the cytochrome b family. PetB subfamily. The 4 large subunits of the cytochrome b6-f complex are cytochrome b6, subunit IV (17 kDa polypeptide, PetD), cytochrome f and the Rieske protein, while the 4 small subunits are PetG, PetL, PetM and PetN. The complex functions as a dimer. Heme b is required as a cofactor. It depends on heme c as a cofactor.

The protein localises to the plastid. Its subcellular location is the chloroplast thylakoid membrane. Functionally, component of the cytochrome b6-f complex, which mediates electron transfer between photosystem II (PSII) and photosystem I (PSI), cyclic electron flow around PSI, and state transitions. The polypeptide is Cytochrome b6 (Nicotiana tomentosiformis (Tobacco)).